The chain runs to 343 residues: Cilia- and flagella-associated protein 36 (343 aa).

Residues Ser85 and Ser147 each carry the phosphoserine modification. Positions 147–187 (SDLEQEEMKILREVLRKSKEEYDQEEERKRKKQSSEAKMEE) form a coiled coil. Residues 165–188 (KEEYDQEEERKRKKQSSEAKMEEL) are disordered. Position 201 is a phosphoserine (Ser201). Composition is skewed to basic and acidic residues over residues 279–293 (QKRDKLLSMRKDTRT) and 301–323 (QKGKPTREAEEMTEKPEMTAEEK). The segment at 279 to 323 (QKRDKLLSMRKDTRTKQIQNTEQKGKPTREAEEMTEKPEMTAEEK) is disordered.

This sequence belongs to the CFAP36 family. As to quaternary structure, interacts with ARL3.

The protein localises to the nucleus. It is found in the cytoplasm. It localises to the cell projection. The protein resides in the cilium. Its subcellular location is the flagellum. Its function is as follows. May act as an effector for ARL3. The polypeptide is Cilia- and flagella-associated protein 36 (Mus musculus (Mouse)).